The following is a 291-amino-acid chain: GTPase Era (291 aa).

The Era-type G domain maps to 2–167; it reads KSGFVSIIGR…LDEIVKCLNE (166 aa). The segment at 10–17 is G1; it reads GRTNAGKS. Residue 10–17 coordinates GTP; the sequence is GRTNAGKS. Residues 36 to 40 are G2; that stretch reads NATRR. The G3 stretch occupies residues 57 to 60; the sequence is DTPG. GTP is bound by residues 57–61 and 116–119; these read DTPGL and NKVD. The segment at 116–119 is G4; it reads NKVD. The interval 146–148 is G5; it reads YSS. The KH type-2 domain occupies 186–274; that stretch reads YRDFILESIY…LLKLFVTVKK (89 aa).

This sequence belongs to the TRAFAC class TrmE-Era-EngA-EngB-Septin-like GTPase superfamily. Era GTPase family. In terms of assembly, monomer.

The protein resides in the cytoplasm. It localises to the cell inner membrane. Functionally, an essential GTPase that binds both GDP and GTP, with rapid nucleotide exchange. Plays a role in 16S rRNA processing and 30S ribosomal subunit biogenesis and possibly also in cell cycle regulation and energy metabolism. In Campylobacter jejuni subsp. doylei (strain ATCC BAA-1458 / RM4099 / 269.97), this protein is GTPase Era.